The sequence spans 177 residues: Bifunctional protein PyrR (177 aa).

The PRPP-binding motif lies at V99 to T111.

The protein belongs to the purine/pyrimidine phosphoribosyltransferase family. PyrR subfamily.

It catalyses the reaction UMP + diphosphate = 5-phospho-alpha-D-ribose 1-diphosphate + uracil. In terms of biological role, regulates the transcription of the pyrimidine nucleotide (pyr) operon in response to exogenous pyrimidines. Its function is as follows. Also displays a weak uracil phosphoribosyltransferase activity which is not physiologically significant. This Geobacter sulfurreducens (strain ATCC 51573 / DSM 12127 / PCA) protein is Bifunctional protein PyrR.